Here is a 172-residue protein sequence, read N- to C-terminus: Co-chaperone protein HscB homolog (172 aa).

The J domain maps to 2-69 (NHFELFNLPV…DSRAAYLLAL (68 aa)).

This sequence belongs to the HscB family. As to quaternary structure, interacts with HscA and stimulates its ATPase activity.

Its function is as follows. Co-chaperone involved in the maturation of iron-sulfur cluster-containing proteins. Seems to help targeting proteins to be folded toward HscA. In Acinetobacter baumannii (strain AB307-0294), this protein is Co-chaperone protein HscB homolog.